The primary structure comprises 29 residues: Potassium channel toxin alpha-KTx 3.15 (29 aa).

Residues Cys-8 and Cys-27 are joined by a disulfide bond.

Belongs to the short scorpion toxin superfamily. Potassium channel inhibitor family. Alpha-KTx 03 subfamily. As to expression, expressed by the venom gland.

It is found in the secreted. In terms of biological role, may play a role in blocking voltage-gated potassium channels Kv1.1/KCNA1, Kv1.3/KCNA3 and Kv1.6/KCNA6. The polypeptide is Potassium channel toxin alpha-KTx 3.15 (Mesobuthus gibbosus (Mediterranean checkered scorpion)).